We begin with the raw amino-acid sequence, 68 residues long: Large ribosomal subunit protein uL30 (68 aa).

The segment at 1-26 is disordered; the sequence is MSAKKSASKATVTVQQIGSPLRREPS. Positions 8-18 are enriched in polar residues; the sequence is SKATVTVQQIG.

This sequence belongs to the universal ribosomal protein uL30 family. Part of the 50S ribosomal subunit.

The polypeptide is Large ribosomal subunit protein uL30 (Parvibaculum lavamentivorans (strain DS-1 / DSM 13023 / NCIMB 13966)).